A 307-amino-acid polypeptide reads, in one-letter code: Elongation factor Ts (307 aa).

The tract at residues 80–83 (TDFV) is involved in Mg(2+) ion dislocation from EF-Tu.

This sequence belongs to the EF-Ts family.

It is found in the cytoplasm. Functionally, associates with the EF-Tu.GDP complex and induces the exchange of GDP to GTP. It remains bound to the aminoacyl-tRNA.EF-Tu.GTP complex up to the GTP hydrolysis stage on the ribosome. The chain is Elongation factor Ts from Azorhizobium caulinodans (strain ATCC 43989 / DSM 5975 / JCM 20966 / LMG 6465 / NBRC 14845 / NCIMB 13405 / ORS 571).